Reading from the N-terminus, the 516-residue chain is 3-phosphoshikimate 1-carboxyvinyltransferase, chloroplastic (516 aa).

The N-terminal 72 residues, Met-1–Glu-72, are a transit peptide targeting the chloroplast. 3 residues coordinate 3-phosphoshikimate: Lys-95, Ser-96, and Arg-100. Phosphoenolpyruvate is bound at residue Lys-95. Gly-173 and Arg-203 together coordinate phosphoenolpyruvate. Residues Ser-250, Ser-251, Gln-252, Ser-278, Asp-403, and Lys-430 each contribute to the 3-phosphoshikimate site. Gln-252 lines the phosphoenolpyruvate pocket. Asp-403 acts as the Proton acceptor in catalysis. Phosphoenolpyruvate contacts are provided by Arg-434, Arg-476, and Lys-501.

The protein belongs to the EPSP synthase family.

Its subcellular location is the plastid. It is found in the chloroplast. The catalysed reaction is 3-phosphoshikimate + phosphoenolpyruvate = 5-O-(1-carboxyvinyl)-3-phosphoshikimate + phosphate. It functions in the pathway metabolic intermediate biosynthesis; chorismate biosynthesis; chorismate from D-erythrose 4-phosphate and phosphoenolpyruvate: step 6/7. In terms of biological role, catalyzes the transfer of the enolpyruvyl moiety of phosphoenolpyruvate (PEP) to the 5-hydroxyl of shikimate-3-phosphate (S3P) to produce enolpyruvyl shikimate-3-phosphate and inorganic phosphate. The polypeptide is 3-phosphoshikimate 1-carboxyvinyltransferase, chloroplastic (Brassica napus (Rape)).